The following is a 211-amino-acid chain: Protein-L-isoaspartate O-methyltransferase (211 aa).

S60 is an active-site residue.

The protein belongs to the methyltransferase superfamily. L-isoaspartyl/D-aspartyl protein methyltransferase family.

Its subcellular location is the cytoplasm. It catalyses the reaction [protein]-L-isoaspartate + S-adenosyl-L-methionine = [protein]-L-isoaspartate alpha-methyl ester + S-adenosyl-L-homocysteine. Catalyzes the methyl esterification of L-isoaspartyl residues in peptides and proteins that result from spontaneous decomposition of normal L-aspartyl and L-asparaginyl residues. It plays a role in the repair and/or degradation of damaged proteins. The protein is Protein-L-isoaspartate O-methyltransferase of Pseudomonas paraeruginosa (strain DSM 24068 / PA7) (Pseudomonas aeruginosa (strain PA7)).